A 428-amino-acid chain; its full sequence is Histidinol dehydrogenase (428 aa).

3 residues coordinate NAD(+): Tyr-126, Gln-188, and Asn-211. Residues Ser-234, Gln-256, and His-259 each coordinate substrate. Residues Gln-256 and His-259 each contribute to the Zn(2+) site. Catalysis depends on proton acceptor residues Glu-324 and His-325. The substrate site is built by His-325, Asp-358, Glu-412, and His-417. Asp-358 lines the Zn(2+) pocket. His-417 lines the Zn(2+) pocket.

This sequence belongs to the histidinol dehydrogenase family. Zn(2+) serves as cofactor.

The catalysed reaction is L-histidinol + 2 NAD(+) + H2O = L-histidine + 2 NADH + 3 H(+). It functions in the pathway amino-acid biosynthesis; L-histidine biosynthesis; L-histidine from 5-phospho-alpha-D-ribose 1-diphosphate: step 9/9. In terms of biological role, catalyzes the sequential NAD-dependent oxidations of L-histidinol to L-histidinaldehyde and then to L-histidine. The chain is Histidinol dehydrogenase from Chlorobium chlorochromatii (strain CaD3).